The primary structure comprises 675 residues: Pesticidal crystal protein Cry25Aa (675 aa).

Belongs to the delta endotoxin family.

Its function is as follows. Promotes colloidosmotic lysis by binding to the midgut epithelial cells of insects. The chain is Pesticidal crystal protein Cry25Aa (cry25Aa) from Bacillus thuringiensis subsp. jegathesan.